The chain runs to 229 residues: Sorting nexin-10A (229 aa).

The PX domain occupies 11–128 (FISVWVRDPQ…HLFLQSQLSI (118 aa)). Positions 54 and 95 each coordinate a 1,2-diacyl-sn-glycero-3-phospho-(1D-myo-inositol-3-phosphate).

Belongs to the sorting nexin family.

Its subcellular location is the cytoplasm. The protein localises to the endosome membrane. It localises to the cytoskeleton. The protein resides in the microtubule organizing center. It is found in the centrosome. Functionally, probable phosphoinositide-binding protein involved in protein sorting and membrane trafficking in endosomes. May play a role in cilium biogenesis through regulation of the transport and the localization of proteins to the cilium. The chain is Sorting nexin-10A (snx10a) from Danio rerio (Zebrafish).